The following is a 209-amino-acid chain: Protocatechuate 3,4-dioxygenase alpha chain (209 aa).

Arginine 142 is a binding site for 3,4-dihydroxybenzoate.

It belongs to the intradiol ring-cleavage dioxygenase family. In terms of assembly, the enzyme is an oligomer of 12 copies of the alpha and beta chains. It depends on Fe(3+) as a cofactor.

It carries out the reaction 3,4-dihydroxybenzoate + O2 = 3-carboxy-cis,cis-muconate + 2 H(+). Its pathway is aromatic compound metabolism; beta-ketoadipate pathway; 3-carboxy-cis,cis-muconate from 3,4-dihydroxybenzoate: step 1/1. In terms of biological role, plays an essential role in the utilization of numerous aromatic and hydroaromatic compounds via the beta-ketoadipate pathway. This is Protocatechuate 3,4-dioxygenase alpha chain (pcaG) from Acinetobacter baylyi (strain ATCC 33305 / BD413 / ADP1).